The sequence spans 345 residues: ATP-dependent (S)-NAD(P)H-hydrate dehydratase (345 aa).

Positions 9–332 (ILSLARSMIP…DMVGEVYEEV (324 aa)) constitute a YjeF C-terminal domain. (6S)-NADPHX is bound by residues Gly113 and 170 to 176 (NVMEFKR). Residues 208-212 (KGPSD) and 241-250 (GGLKRVGGQG) each bind ATP. Asp251 serves as a coordination point for (6S)-NADPHX.

The protein belongs to the NnrD/CARKD family. Requires Mg(2+) as cofactor.

It localises to the cytoplasm. The enzyme catalyses (6S)-NADHX + ATP = ADP + phosphate + NADH + H(+). It catalyses the reaction (6S)-NADPHX + ATP = ADP + phosphate + NADPH + H(+). In terms of biological role, catalyzes the dehydration of the S-form of NAD(P)HX at the expense of ATP, which is converted to ADP. Together with NAD(P)HX epimerase, which catalyzes the epimerization of the S- and R-forms, the enzyme allows the repair of both epimers of NAD(P)HX, a damaged form of NAD(P)H that is a result of enzymatic or heat-dependent hydration. The chain is ATP-dependent (S)-NAD(P)H-hydrate dehydratase from Cryptococcus neoformans var. neoformans serotype D (strain JEC21 / ATCC MYA-565) (Filobasidiella neoformans).